The primary structure comprises 378 residues: Deoxyguanosinetriphosphate triphosphohydrolase-like protein (378 aa).

The segment at methionine 1–phenylalanine 28 is disordered. The segment covering arginine 15–serine 26 has biased composition (polar residues). The region spanning arginine 62–serine 198 is the HD domain.

It belongs to the dGTPase family. Type 2 subfamily.

This chain is Deoxyguanosinetriphosphate triphosphohydrolase-like protein, found in Cereibacter sphaeroides (strain ATCC 17025 / ATH 2.4.3) (Rhodobacter sphaeroides).